We begin with the raw amino-acid sequence, 723 residues long: Envelope glycoprotein H (723 aa).

A signal peptide spans 1-23 (MSPATRFTVISCLVVSLITPSET). Residues 24 to 700 (SSWFDPFIEW…IIDIRQTSIF (677 aa)) are Virion surface-facing. N-linked (GlcNAc...) asparagine; by host glycosylation is found at Asn-39, Asn-45, Asn-144, and Asn-174. The segment at 197–263 (HQFAIVLTFT…QSYRDDLLIV (67 aa)) is interaction with gL. N-linked (GlcNAc...) asparagine; by host glycosylation is found at Asn-270, Asn-340, Asn-411, Asn-543, Asn-621, and Asn-681. Residues 701 to 721 (MIMLYCSLGVLLLYGLYRLLH) traverse the membrane as a helical segment. Topologically, residues 722 to 723 (MI) are intravirion.

It belongs to the herpesviridae glycoprotein H family. As to quaternary structure, interacts with glycoprotein L (gL); this interaction is necessary for the correct processing and cell surface expression of gH. The heterodimer gH/gL seems to interact with gB trimers during fusion. N-glycosylated, O-glycosylated, and sialylated.

It localises to the virion membrane. The protein localises to the host cell membrane. The protein resides in the host endosome membrane. Its function is as follows. The heterodimer glycoprotein H-glycoprotein L is required for the fusion of viral and plasma membranes leading to virus entry into the host cell. Following initial binding to host receptor, membrane fusion is mediated by the fusion machinery composed of gB and the heterodimer gH/gL. May also be involved in the fusion between the virion envelope and the outer nuclear membrane during virion morphogenesis. The chain is Envelope glycoprotein H from Guinea pig cytomegalovirus (strain 22122) (GPCMV).